The primary structure comprises 247 residues: MTILFLTMVISYFGCMKAAPMKEANVRGQGSLAYPGVRTHGTLESVNGPKAGSRGLTSLADTFEHVIEELLDEDQKVRPNEENNKDADLYTSRVMLSSQVPLEPPLLFLLEEYKNYLDAANMSMRVRRHSDPARRGELSVCDSISEWVTAADKKTAVDMSGGTVTVLEKVPVSKGQLKQYFYETKCNPMGYTKEGCRGIDKRHWNSQCRTTQSYVRALTMDSKKRIGWRFIRIDTSCVCTLTIKRGR.

An N-terminal signal peptide occupies residues 1 to 18 (MTILFLTMVISYFGCMKA). A propeptide spanning residues 19-128 (APMKEANVRG…AANMSMRVRR (110 aa)) is cleaved from the precursor. N-linked (GlcNAc...) asparagine glycosylation is present at N121. Intrachain disulfides connect C141/C208, C186/C237, and C196/C239.

It belongs to the NGF-beta family. Monomers and homodimers. Binds to NTRK2/TRKB. Can form heterodimers with other neurotrophin family members, such as NTF3 and NTF4 (in vitro), but the physiological relevance of this is not clear. BDNF precursor form: interacts with the heterodimer formed by NGFR and SORCS2. Mature BDNF has much lower affinity for the heterodimer formed by NGFR and SORCS2. In terms of processing, N-glycosylated and glycosulfated, contrary to mature BDNF. Post-translationally, mature BDNF is produced by proteolytic removal of the propeptide, catalyzed by a FURIN family member. In addition, the precursor form is proteolytically cleaved within the propeptide, but this is not an obligatory intermediate for the production of mature BDNF. Can be converted into mature BDNF by plasmin (PLG).

It localises to the secreted. In terms of biological role, important signaling molecule that activates signaling cascades downstream of NTRK2. During development, promotes the survival and differentiation of selected neuronal populations of the peripheral and central nervous systems. Participates in axonal growth, pathfinding and in the modulation of dendritic growth and morphology. Major regulator of synaptic transmission and plasticity at adult synapses in many regions of the CNS. The versatility of BDNF is emphasized by its contribution to a range of adaptive neuronal responses including long-term potentiation (LTP), long-term depression (LTD), certain forms of short-term synaptic plasticity, as well as homeostatic regulation of intrinsic neuronal excitability. Functionally, important signaling molecule that activates signaling cascades downstream of NTRK2. Activates signaling cascades via the heterodimeric receptor formed by NGFR and SORCS2. Signaling via NGFR and SORCS2 plays a role in synaptic plasticity and long-term depression (LTD). Binding to NGFR and SORCS2 promotes neuronal apoptosis. Promotes neuronal growth cone collapse. This chain is Neurotrophic factor BDNF precursor form (BDNF), found in Ailuropoda melanoleuca (Giant panda).